The sequence spans 285 residues: MPELPEVEVVRRGLAEHVTGKTITGVRVHHPRAVRRHEAGPADLTARLLDVRITGTGRRGKYLWLTLDDSAALVVHLGMSGQMLLGPIRDTRHLRIAAVLDDGTALSFVDQRTFGGWQLTEMVTVDGTDVPEPVAHIARDPLDPLFDRDRVVTVLRGKHSEIKRQLLDQTVVSGIGNIYADEALWRTKINGARIAAALPRRRLAELLDAAAEVMTDALGQGGTSFDSLYVNVNGESGYFDRSLDAYGREGEPCRRCGAIMRREKFMNRSSFYCPRCQPRPRVPRV.

Proline 2 (schiff-base intermediate with DNA) is an active-site residue. The Proton donor role is filled by glutamate 3. Residue lysine 61 is the Proton donor; for beta-elimination activity of the active site. 3 residues coordinate DNA: histidine 93, arginine 112, and lysine 158. The FPG-type zinc-finger motif lies at 244–278 (DAYGREGEPCRRCGAIMRREKFMNRSSFYCPRCQP). Arginine 268 acts as the Proton donor; for delta-elimination activity in catalysis.

It belongs to the FPG family. As to quaternary structure, monomer. The cofactor is Zn(2+).

The enzyme catalyses Hydrolysis of DNA containing ring-opened 7-methylguanine residues, releasing 2,6-diamino-4-hydroxy-5-(N-methyl)formamidopyrimidine.. It catalyses the reaction 2'-deoxyribonucleotide-(2'-deoxyribose 5'-phosphate)-2'-deoxyribonucleotide-DNA = a 3'-end 2'-deoxyribonucleotide-(2,3-dehydro-2,3-deoxyribose 5'-phosphate)-DNA + a 5'-end 5'-phospho-2'-deoxyribonucleoside-DNA + H(+). Involved in base excision repair of DNA damaged by oxidation or by mutagenic agents. Acts as a DNA glycosylase that recognizes and removes damaged bases. Acts on oxidized purines, such as 7,8-dihydro-8-oxoguanine (8-oxoG) when paired with C, G or T. Has AP (apurinic/apyrimidinic) lyase activity and introduces nicks in the DNA strand. Cleaves the DNA backbone by beta-delta elimination to generate a single-strand break at the site of the removed base with both 3'- and 5'-phosphates. The protein is Formamidopyrimidine-DNA glycosylase (fpg) of Mycolicibacterium smegmatis (strain ATCC 700084 / mc(2)155) (Mycobacterium smegmatis).